The primary structure comprises 1173 residues: Calcium-transporting ATPase 2 (1173 aa).

The segment at 1–24 (MSRQDENSALLANNENNKPSYTGN) is disordered. Over 1 to 114 (MSRQDENSAL…LQLVWAAFND (114 aa)) the chain is Cytoplasmic. Low complexity predominate over residues 7 to 17 (NSALLANNENN). Residues 115–139 (KTMQLLTVAAVVSFVLGLYELWMQP) form a helical membrane-spanning segment. Over 140–152 (PQYDPEGNKIKQV) the chain is Vacuolar. Residues 153-173 (DWIEGVAIMIAVFVVVLVSAA) form a helical membrane-spanning segment. Topologically, residues 174 to 349 (NDYQKELQFA…LADNISVYGC (176 aa)) are cytoplasmic. A helical membrane pass occupies residues 350 to 368 (VSAIILFLVLFTRYLFYII). Topologically, residues 369–388 (PEDGRFHDLDPAQKGSKFMN) are vacuolar. The chain crosses the membrane as a helical span at residues 389-409 (IFITSITVIVVAVPEGLPLAV). Ca(2+)-binding residues include valine 398 and glutamate 403. At 410–899 (TLALAFATTR…RCVSVSIKKF (490 aa)) the chain is on the cytoplasmic side. Aspartate 445 serves as the catalytic 4-aspartylphosphate intermediate. Residues aspartate 445 and threonine 447 each coordinate Mg(2+). ATP is bound by residues threonine 447, lysine 643, 762–764 (TGD), arginine 816, and lysine 822. A Mg(2+)-binding site is contributed by aspartate 841. Asparagine 844 lines the ATP pocket. Residues 900-922 (IQFQLIVNITAVILTFVSSVASS) traverse the membrane as a helical segment. Ca(2+) is bound at residue asparagine 907. The Vacuolar portion of the chain corresponds to 923-929 (DETSVLT). A helical membrane pass occupies residues 930–950 (AVQLLWINLIMDTLAALALAT). Residues asparagine 937 and aspartate 941 each contribute to the Ca(2+) site. Over 951–976 (DKPDPNIMDRKPRGRSTSLISVSTWK) the chain is Cytoplasmic. The chain crosses the membrane as a helical span at residues 977 to 998 (MILSQATLQLIVTFILHFYGPE). At 999 to 1010 (LFFKKHEDEITS) the chain is on the vacuolar side. The chain crosses the membrane as a helical span at residues 1011–1029 (HQQQQLNAMTFNTFVWLQF). The Cytoplasmic segment spans residues 1030–1065 (FTMLVSRKLDEGDGISNWRGRISAANLNFFQDLGRN). The chain crosses the membrane as a helical span at residues 1066–1086 (YYFLTIMAIIGSCQVLIMFFG). The Vacuolar segment spans residues 1087–1099 (GAPFSIARQTKSM). A helical membrane pass occupies residues 1100–1120 (WITAVLCGMLSLIMGVLVRIC). The Cytoplasmic portion of the chain corresponds to 1121–1173 (PDEVAVKVFPAAFVQRFKYVFGLEFLRKNHTGKHDDEEALLEESDSPESTAFY).

Belongs to the cation transport ATPase (P-type) (TC 3.A.3) family.

The protein resides in the vacuole membrane. It carries out the reaction Ca(2+)(in) + ATP + H2O = Ca(2+)(out) + ADP + phosphate + H(+). Functionally, this magnesium-dependent enzyme catalyzes the hydrolysis of ATP coupled with the transport of calcium. Transports the calcium to the vacuole and participates in the control of the cytosolic free calcium. This chain is Calcium-transporting ATPase 2 (PMC1), found in Saccharomyces cerevisiae (strain ATCC 204508 / S288c) (Baker's yeast).